A 34-amino-acid chain; its full sequence is Ornithine carbamoyltransferase, catabolic (34 aa).

This sequence belongs to the aspartate/ornithine carbamoyltransferase superfamily. OTCase family. As to quaternary structure, probably nonameric or dodecameric.

Its subcellular location is the cytoplasm. It carries out the reaction carbamoyl phosphate + L-ornithine = L-citrulline + phosphate + H(+). Its pathway is amino-acid degradation; L-arginine degradation via ADI pathway; carbamoyl phosphate from L-arginine: step 2/2. The protein is Ornithine carbamoyltransferase, catabolic (arcB) of Pseudomonas putida (Arthrobacter siderocapsulatus).